A 200-amino-acid chain; its full sequence is HTH-type transcriptional regulator BetI (200 aa).

Residues 8-68 form the HTH tetR-type domain; the sequence is SIRKQQLIQA…AAMRHIQYQL (61 aa). Positions 31–50 form a DNA-binding region, H-T-H motif; sequence SIALIARKAGVSNGIISHYF.

It functions in the pathway amine and polyamine biosynthesis; betaine biosynthesis via choline pathway [regulation]. Repressor involved in the biosynthesis of the osmoprotectant glycine betaine. It represses transcription of the choline transporter BetT and the genes of BetAB involved in the synthesis of glycine betaine. This is HTH-type transcriptional regulator BetI from Proteus mirabilis (strain HI4320).